The sequence spans 589 residues: UvrABC system protein C (589 aa).

In terms of domain architecture, GIY-YIG spans 13-90 (PNPGCYLFKN…IKTHTPKYNF (78 aa)). The UVR domain maps to 194–229 (KDILKKLHHLMQKASEKMFYEKAQEYRDIIDSIKQT).

It belongs to the UvrC family. As to quaternary structure, interacts with UvrB in an incision complex.

The protein resides in the cytoplasm. The UvrABC repair system catalyzes the recognition and processing of DNA lesions. UvrC both incises the 5' and 3' sides of the lesion. The N-terminal half is responsible for the 3' incision and the C-terminal half is responsible for the 5' incision. In Aster yellows witches'-broom phytoplasma (strain AYWB), this protein is UvrABC system protein C.